Reading from the N-terminus, the 609-residue chain is Cell division protein DipM (609 aa).

The signal sequence occupies residues 1-24 (MRQLWTQAAVIALTAGTLGAPAHA). Residues 21-103 (PAHASGQSGQ…PVLRATPPRT (83 aa)) form a disordered region. The segment covering 25–38 (SGQSGQRFTPNFPI) has biased composition (polar residues). A compositionally biased stretch (pro residues) spans 79–93 (LPPPAPVSTPAPAPQ). 2 LysM domains span residues 121-165 (QVRV…KIKG) and 171-215 (KAYV…KLLL). Low complexity-rich tracts occupy residues 242 to 258 (AEPA…AATP) and 265 to 280 (PVSE…STTT). Residues 242 to 280 (AEPAPATTRPATPAATPSRPVRQPVSEETSEPATTSTTT) are disordered. LysM domains are found at residues 295 to 339 (QVHT…KIKG) and 345 to 389 (KAYS…KIAL). The tract at residues 389-457 (LPDGFRDKGP…AAQPITPPPS (69 aa)) is disordered. A compositionally biased stretch (low complexity) spans 400–429 (RTTTTTRPATPPANTYARVDSSAAAASTPS). The lytM stretch occupies residues 503-603 (NDGLNIRAPQ…VKDKAKPVDP (101 aa)).

Its subcellular location is the periplasm. Its function is as follows. Required for efficient cell division, cell polarity and normal cell morphology. Facilitates remodeling of the peptidoglycan layer and, thus, coordinated constriction of the cell envelope during the division process. Plays a critical role in maintaining proper cell envelope architecture during growth and division. Required for normal envelope invagination during cell division and to establish or maintain outer membrane connections throughout the cell envelope. May serve as a regulatory hub coordinating the activities of multiple peptidoglycan-degrading enzymes during cell constriction. Required to position SdpA and SdpB at midcell. The chain is Cell division protein DipM from Caulobacter vibrioides (strain NA1000 / CB15N) (Caulobacter crescentus).